The sequence spans 89 residues: Small ribosomal subunit protein uS15 (89 aa).

It belongs to the universal ribosomal protein uS15 family. As to quaternary structure, part of the 30S ribosomal subunit. Forms a bridge to the 50S subunit in the 70S ribosome, contacting the 23S rRNA.

One of the primary rRNA binding proteins, it binds directly to 16S rRNA where it helps nucleate assembly of the platform of the 30S subunit by binding and bridging several RNA helices of the 16S rRNA. In terms of biological role, forms an intersubunit bridge (bridge B4) with the 23S rRNA of the 50S subunit in the ribosome. The chain is Small ribosomal subunit protein uS15 from Gluconobacter oxydans (strain 621H) (Gluconobacter suboxydans).